The chain runs to 499 residues: Serine/threonine-protein kinase RHS3 (499 aa).

The segment at 1–92 is disordered; the sequence is MLLKPGNKLV…NSSKPHTGGD (92 aa). Residues 39–55 show a composition bias toward basic and acidic residues; that stretch reads QKQVEQNTKKIEEHQIK. A compositionally biased stretch (low complexity) spans 63 to 85; the sequence is SNHNVNMSSQSNNSESTSTNNSS. The 324-residue stretch at 113 to 436 folds into the Protein kinase domain; the sequence is FRVLKRLGYG…ATEIKQHPFF (324 aa). ATP-binding positions include 119–127 and lysine 144; that span reads LGYGDIGSV. Aspartate 240 serves as the catalytic Proton acceptor. Residues 437–499 enclose the AGC-kinase C-terminal domain; sequence EGVNWALIRG…DPDYIVFEYF (63 aa).

Belongs to the protein kinase superfamily. AGC Ser/Thr protein kinase family. As to quaternary structure, interacts with PDPK1/PDK1. In terms of processing, autophosphorylated and phosphorylated by PDPK1/PDK1. In terms of tissue distribution, specifically expressed in root hair cells.

It carries out the reaction L-seryl-[protein] + ATP = O-phospho-L-seryl-[protein] + ADP + H(+). It catalyses the reaction L-threonyl-[protein] + ATP = O-phospho-L-threonyl-[protein] + ADP + H(+). Its activity is regulated as follows. Activated by PDPK1/PDK1. Involved in root hair growth and morphogenesis. This chain is Serine/threonine-protein kinase RHS3, found in Arabidopsis thaliana (Mouse-ear cress).